The sequence spans 803 residues: Ras GTPase-activating protein 4B (803 aa).

C2 domains follow at residues 1-105 (MAKR…SGWA) and 116-232 (VQGE…EGWF). Ca(2+) is bound by residues Asp-21, Asp-27, Asp-74, Asp-76, Ser-79, Asp-82, Asp-149, Asp-155, Asp-202, Asp-204, Ser-207, and Asp-210. The region spanning 318–546 (GLAKDFLDLL…AQLKDFITKL (229 aa)) is the Ras-GAP domain. The region spanning 566–673 (PPVKEGPLFI…WLSALRKVSI (108 aa)) is the PH domain. The segment at 675–711 (NTGLLGSYHPGVFRGDKWSCCHQKEKTGQGCDKTRSR) adopts a Btk-type zinc-finger fold. 4 residues coordinate Zn(2+): His-683, Cys-694, Cys-695, and Cys-705. A disordered region spans residues 781–803 (EAHSSSPAGSPPSEPNCLLELQT).

It depends on Ca(2+) as a cofactor.

Its subcellular location is the cytoplasm. It is found in the cytosol. The protein localises to the cell membrane. Its function is as follows. Ca(2+)-dependent Ras GTPase-activating protein, that may play a role in the Ras-MAPK pathway. This chain is Ras GTPase-activating protein 4B (RASA4B), found in Homo sapiens (Human).